The primary structure comprises 348 residues: MSDRQAALDMALKQIEKQFGKGSIMKLGEKTDTRISTVPSGSLALDTALGIGGYPRGRIIEVYGPESSGKTTVALHAIAEVQQQGGQAAFIDAEHALDPVYAQKLGVNIEELLLSQPDTGEQALEIAEALVRSGAVDIVVVDSVAALVPKAEIEGDMGDSHVGLQARLMSQALRKLSGAINKSKTIAIFINQIREKVGVMFGNPETTPGGRALKFYSSVRLEVRRAEQLKQGNDVMGNKTKIKVVKNKVAPPFRTAEVDIMYGEGISKEGEIIDLGTELDIVQKSGSWYSYEEERLGQGRENAKQFLKENKDIMLMIQEQIREHYGLDNNGVVQQQAEETQEELEFEE.

64-71 (GPESSGKT) contributes to the ATP binding site.

The protein belongs to the RecA family. In terms of assembly, monomer; forms higher-order oligomers. Interacts with RecU. Interacts with DprA (smf). Interacts with RecD2.

The protein resides in the cytoplasm. Its subcellular location is the nucleoid. Functionally, multifunctional protein involved in homologous recombination, DNA repair and competence. Can catalyze the hydrolysis of (d)ATP in the presence of single-stranded (ss)DNA; prefers dATP at least in vitro, catalyzes the dATP-dependent uptake of ssDNA by duplex DNA, and the dATP-dependent hybridization of homologous ssDNA (strand exchange). RecA-ATP cannot catalyze homologous DNA strand exchange; SsbA and DprA activate strand exchange by RecA-ATP. It interacts with LexA causing its activation and leading to its autocatalytic cleavage. Hydrolysis of ATP in the presence of ssDNA is partially inhibited by RecU. Required for DNA transformation; protects transforming DNA from degradation, possibly in combination with DprA. Blocks replication of both leading and lagging strand DNA in the presence of RecO and SsbA; RecD2 is able to overcome this blockage. Recruited to repair centers (RCs), foci that are the site of double-stranded DNA break(s), after RecN. Concomitant with the appearance of RecO at the RCs, RecA forms threads that extend from RCs toward the opposite cell half, possibly searching for sequence homology along the sister chromosome. The threads disappear after about 2 hours. Thread formation is absolutely dependent on RecJ or AadAB. Thread formation is also dependent on RarA. The protein is Protein RecA of Bacillus subtilis (strain 168).